The sequence spans 233 residues: Nickel import system ATP-binding protein NikE (233 aa).

Positions 2–228 (IELKHVTFGY…DRHSYTKELV (227 aa)) constitute an ABC transporter domain. 35–42 (GESGCGKS) lines the ATP pocket.

This sequence belongs to the ABC transporter superfamily. In terms of assembly, the complex is composed of two ATP-binding proteins (NikD and NikE), two transmembrane proteins (NikB and NikC) and a solute-binding protein (NikA).

Its subcellular location is the cell membrane. The enzyme catalyses Ni(2+)(out) + ATP + H2O = Ni(2+)(in) + ADP + phosphate + H(+). Its function is as follows. Part of the ABC transporter complex NikABCDE (Opp2) involved in nickel import. Probably responsible for energy coupling to the transport system. The chain is Nickel import system ATP-binding protein NikE from Staphylococcus aureus (strain bovine RF122 / ET3-1).